Reading from the N-terminus, the 156-residue chain is D-aminoacyl-tRNA deacylase (156 aa).

Positions 142 to 143 match the Gly-cisPro motif, important for rejection of L-amino acids motif; the sequence is GP.

This sequence belongs to the DTD family. Homodimer.

Its subcellular location is the cytoplasm. It carries out the reaction glycyl-tRNA(Ala) + H2O = tRNA(Ala) + glycine + H(+). It catalyses the reaction a D-aminoacyl-tRNA + H2O = a tRNA + a D-alpha-amino acid + H(+). An aminoacyl-tRNA editing enzyme that deacylates mischarged D-aminoacyl-tRNAs. Also deacylates mischarged glycyl-tRNA(Ala), protecting cells against glycine mischarging by AlaRS. Acts via tRNA-based rather than protein-based catalysis; rejects L-amino acids rather than detecting D-amino acids in the active site. By recycling D-aminoacyl-tRNA to D-amino acids and free tRNA molecules, this enzyme counteracts the toxicity associated with the formation of D-aminoacyl-tRNA entities in vivo and helps enforce protein L-homochirality. In Delftia acidovorans (strain DSM 14801 / SPH-1), this protein is D-aminoacyl-tRNA deacylase.